A 200-amino-acid polypeptide reads, in one-letter code: MDLKTVTGAAVELSDTAFGREFNEALVHQVVTAYLAGARQGTRAQKTRAEVSGGGIKPWRQKGTGRARAGSIRSPIWRGGGRAFAAKPQDWSQKVNRKMYRGAMQCILAELIRQERLILVEEISVSGPKTKELIAKLGELNASRALIVTKEVDENLYLAARNIPHVNVLDTSEVDPVSLIAFDKVIMTVEAAKQFEEALA.

The segment at 45 to 64 (QKTRAEVSGGGIKPWRQKGT) is disordered.

It belongs to the universal ribosomal protein uL4 family. In terms of assembly, part of the 50S ribosomal subunit.

In terms of biological role, one of the primary rRNA binding proteins, this protein initially binds near the 5'-end of the 23S rRNA. It is important during the early stages of 50S assembly. It makes multiple contacts with different domains of the 23S rRNA in the assembled 50S subunit and ribosome. Forms part of the polypeptide exit tunnel. The chain is Large ribosomal subunit protein uL4 from Psychrobacter cryohalolentis (strain ATCC BAA-1226 / DSM 17306 / VKM B-2378 / K5).